The chain runs to 258 residues: Alcohol dehydrogenase 2 (258 aa).

9–33 (IFVGGLGFIGYEACKQLMAKNMASF) contributes to the NAD(+) binding site. Residue S137 coordinates substrate. Y150 serves as the catalytic Proton acceptor.

The protein belongs to the short-chain dehydrogenases/reductases (SDR) family. Homodimer.

The enzyme catalyses a primary alcohol + NAD(+) = an aldehyde + NADH + H(+). It catalyses the reaction a secondary alcohol + NAD(+) = a ketone + NADH + H(+). This Ceratitis rosa (Natal fruit fly) protein is Alcohol dehydrogenase 2 (ADH2).